The chain runs to 256 residues: MSQEQPRRPREPVKYGDVFEVSGELADKPIAPEDAKMMQSAETHVFGHTQKGGPAAVMQSAATTNIRGGFVHPDDKTELVAERGATVEQTVPAATVTTEFVGGQVVGQHVEPRRVVAAARTDEEALQSTITIGEALEATVKTAGNKPVDQSDAAAIQAAEMRASGTNVIALAGVAASAQSAADHNATVDRDERKIKLRDVLTGAAGKLSADRAVTREDAEGVVSAEMRNNPKLCTHPGGVAASLTVAARLNERVDI.

A compositionally biased stretch (basic and acidic residues) spans 1–14; the sequence is MSQEQPRRPREPVK. The disordered stretch occupies residues 1–20; it reads MSQEQPRRPREPVKYGDVFE. A Nuclear localization signal (NLS) motif is present at residues 5–9; the sequence is QPRRP. SMP domains lie at 13–66, 130–187, and 195–253; these read VKYG…TTNI, ITIG…HNAT, and IKLR…LNER.

This sequence belongs to the LEA type SMP family. In terms of tissue distribution, embryo specific, only in dry mature seeds. Expressed at low levels.

It localises to the cytoplasm. The protein localises to the nucleus. In terms of biological role, LEA proteins are late embryonic proteins abundant in higher plant seed embryos. The function of those proteins is not known. The chain is Late embryogenesis abundant protein 32 from Arabidopsis thaliana (Mouse-ear cress).